The chain runs to 181 residues: Photosystem I assembly protein Ycf4 (181 aa).

The next 2 membrane-spanning stretches (helical) occupy residues 19–41 and 61–83; these read YAWC…GSYF and IVMM…SIFT.

Belongs to the Ycf4 family.

Its subcellular location is the plastid. The protein resides in the chloroplast thylakoid membrane. In terms of biological role, seems to be required for the assembly of the photosystem I complex. This chain is Photosystem I assembly protein Ycf4, found in Guillardia theta (Cryptophyte).